Here is a 358-residue protein sequence, read N- to C-terminus: tRNA-specific 2-thiouridylase MnmA 2 (358 aa).

ATP contacts are provided by residues 11–18 (GMSGGVDS) and methionine 37. Cysteine 106 acts as the Nucleophile in catalysis. An intrachain disulfide couples cysteine 106 to cysteine 202. Glycine 130 lines the ATP pocket. The interaction with tRNA stretch occupies residues 152 to 154 (KDQ). Cysteine 202 functions as the Cysteine persulfide intermediate in the catalytic mechanism. Residues 308–309 (RY) are interaction with tRNA.

The protein belongs to the MnmA/TRMU family.

The protein localises to the cytoplasm. The enzyme catalyses S-sulfanyl-L-cysteinyl-[protein] + uridine(34) in tRNA + AH2 + ATP = 2-thiouridine(34) in tRNA + L-cysteinyl-[protein] + A + AMP + diphosphate + H(+). In terms of biological role, catalyzes the 2-thiolation of uridine at the wobble position (U34) of tRNA, leading to the formation of s(2)U34. This chain is tRNA-specific 2-thiouridylase MnmA 2, found in Clostridium tetani (strain Massachusetts / E88).